Consider the following 149-residue polypeptide: Transcriptional repressor NrdR (149 aa).

A zinc finger spans residues Cys3 to Cys34. The ATP-cone domain occupies Pro49–Gln139.

It belongs to the NrdR family. Zn(2+) is required as a cofactor.

Functionally, negatively regulates transcription of bacterial ribonucleotide reductase nrd genes and operons by binding to NrdR-boxes. The protein is Transcriptional repressor NrdR of Shewanella frigidimarina (strain NCIMB 400).